The following is a 367-amino-acid chain: DNA replication and repair protein RecF (367 aa).

30–37 (GSNGSGKT) contributes to the ATP binding site.

Belongs to the RecF family.

It localises to the cytoplasm. Functionally, the RecF protein is involved in DNA metabolism; it is required for DNA replication and normal SOS inducibility. RecF binds preferentially to single-stranded, linear DNA. It also seems to bind ATP. The chain is DNA replication and repair protein RecF from Pseudomonas putida (strain ATCC 700007 / DSM 6899 / JCM 31910 / BCRC 17059 / LMG 24140 / F1).